We begin with the raw amino-acid sequence, 609 residues long: UvrABC system protein C (609 aa).

The GIY-YIG domain occupies 16–94; that stretch reads SSAGVYRMYD…IKQYMPKYNV (79 aa). Residues 203–238 form the UVR domain; that stretch reads KQVISELVAKMEEAAGQQAYEQAARFRDQIMALRRV.

This sequence belongs to the UvrC family. Interacts with UvrB in an incision complex.

It is found in the cytoplasm. In terms of biological role, the UvrABC repair system catalyzes the recognition and processing of DNA lesions. UvrC both incises the 5' and 3' sides of the lesion. The N-terminal half is responsible for the 3' incision and the C-terminal half is responsible for the 5' incision. This chain is UvrABC system protein C, found in Shewanella sp. (strain ANA-3).